The sequence spans 197 residues: Imidazoleglycerol-phosphate dehydratase (197 aa).

It belongs to the imidazoleglycerol-phosphate dehydratase family.

Its subcellular location is the cytoplasm. It catalyses the reaction D-erythro-1-(imidazol-4-yl)glycerol 3-phosphate = 3-(imidazol-4-yl)-2-oxopropyl phosphate + H2O. The protein operates within amino-acid biosynthesis; L-histidine biosynthesis; L-histidine from 5-phospho-alpha-D-ribose 1-diphosphate: step 6/9. This chain is Imidazoleglycerol-phosphate dehydratase, found in Gloeobacter violaceus (strain ATCC 29082 / PCC 7421).